A 279-amino-acid polypeptide reads, in one-letter code: Zinc finger CCCH domain-containing protein 1 (279 aa).

The tract at residues 20–45 (DVIVLSPGPPARRRPPPVKAVEPESG) is disordered. 2 C3H1-type zinc fingers span residues 56-84 (FYKT…HGDE) and 139-167 (RAIT…HVSA).

This chain is Zinc finger CCCH domain-containing protein 1, found in Oryza sativa subsp. japonica (Rice).